A 179-amino-acid polypeptide reads, in one-letter code: Hypoxanthine phosphoribosyltransferase (179 aa).

Diphosphate-binding residues include Arg-45 and Gly-46. Glu-101 contacts GMP. IMP is bound at residue Glu-101. Glu-101 and Asp-102 together coordinate Mg(2+). The active-site Proton acceptor is Asp-105. Residues 105-110 (DTGYTL), Lys-133, and Asp-161 each bind GMP. Residues 105 to 110 (DTGYTL) and Lys-133 each bind IMP. Diphosphate is bound at residue Arg-167.

This sequence belongs to the purine/pyrimidine phosphoribosyltransferase family. Homotetramer. Mg(2+) is required as a cofactor.

The protein resides in the cytoplasm. The enzyme catalyses IMP + diphosphate = hypoxanthine + 5-phospho-alpha-D-ribose 1-diphosphate. The catalysed reaction is GMP + diphosphate = guanine + 5-phospho-alpha-D-ribose 1-diphosphate. It participates in purine metabolism; IMP biosynthesis via salvage pathway; IMP from hypoxanthine: step 1/1. Functionally, purine salvage pathway enzyme which catalyzes the transfer of the ribosyl-5-phosphate group from 5-phospho-alpha-D-ribose 1-diphosphate (PRPP) to the N9 position of hypoxanthine to yield IMP (inosine 5'-monophosphate). To a lesser extent, can also act on guanine leading to GMP, but shows a highly less efficient activity with xanthine. The polypeptide is Hypoxanthine phosphoribosyltransferase (hpt) (Haemophilus influenzae (strain ATCC 51907 / DSM 11121 / KW20 / Rd)).